The following is a 158-amino-acid chain: 6,7-dimethyl-8-ribityllumazine synthase 2 (158 aa).

5-amino-6-(D-ribitylamino)uracil-binding positions include W20, 54–56 (AYE), and 78–80 (FVI). R86 (proton donor) is an active-site residue. S111 provides a ligand contact to 5-amino-6-(D-ribitylamino)uracil. H125 is a binding site for (2S)-2-hydroxy-3-oxobutyl phosphate.

This sequence belongs to the DMRL synthase family. In terms of assembly, homodecamer, arranged as a dimer of pentamers.

The protein resides in the cytoplasm. The enzyme catalyses (2S)-2-hydroxy-3-oxobutyl phosphate + 5-amino-6-(D-ribitylamino)uracil = 6,7-dimethyl-8-(1-D-ribityl)lumazine + phosphate + 2 H2O + H(+). It participates in cofactor biosynthesis; riboflavin biosynthesis; riboflavin from 2-hydroxy-3-oxobutyl phosphate and 5-amino-6-(D-ribitylamino)uracil: step 1/2. Catalyzes the formation of 6,7-dimethyl-8-ribityllumazine by condensation of 5-amino-6-(D-ribitylamino)uracil with 3,4-dihydroxy-2-butanone 4-phosphate. This is the penultimate step in the biosynthesis of riboflavin. The isozyme RibH2 but not RibH1 is essential for Brucella intracellular survival and replication inside macrophages or in mice. Displays low catalytic activity in comparison with the isozyme RibH1. Is a highly immunogenic protein. Activates dendritic cells (DCs) in vitro, increasing the levels of costimulatory molecules and the secretion of pro-inflammatory cytokines, and recruits DCs, B cells and CD8+ T cells in vivo, both effects in a TLR4-dependent manner. Induces the cross presentation of covalently attached peptides and generates a strong and long-lasting humoral immune response without adjuvants; TLR4 signaling is necessary for the induction of the cytotoxic response but not for antigen cross presentation. Elicits a TLR4-mediated protective response against B16 melanoma in mice, slowing tumor growth and prolonging mice survival. The protein is 6,7-dimethyl-8-ribityllumazine synthase 2 of Brucella abortus (strain 2308).